The sequence spans 265 residues: Small ribosomal subunit protein uS2 (265 aa).

The protein belongs to the universal ribosomal protein uS2 family.

The sequence is that of Small ribosomal subunit protein uS2 from Microcystis aeruginosa (strain NIES-843 / IAM M-2473).